A 333-amino-acid chain; its full sequence is MRIAVDAMGGDHAPKAVIDGVIKGIEAFDDLHITLVGDKTTIESHLTTTSDRITVLHADEVIEPTDEPVRAVRRKKNSSMVLMAQEVAENRADACISAGNTGALMTAGLFIVGRIKGIDRPALAPTLPTVSGDGFLLLDVGANVDAKPEHLVQYAIMGSVYSQQVRGVTSPRVGLLNVGTEDKKGNELTKQTFQILKETANINFIGNVEARDLLDDVADVVVTDGFTGNVTLKTLEGSALSIFKMMRDVMTSTLTSKLAAAVLKPKLKEMKMKMEYSNYGGASLFGLKAPVIKAHGSSDSNAVFHAIRQAREMVSQNVAALIQEEVKEEKTDE.

The protein belongs to the PlsX family. As to quaternary structure, homodimer. Probably interacts with PlsY.

Its subcellular location is the cytoplasm. It carries out the reaction a fatty acyl-[ACP] + phosphate = an acyl phosphate + holo-[ACP]. It participates in lipid metabolism; phospholipid metabolism. Catalyzes the reversible formation of acyl-phosphate (acyl-PO(4)) from acyl-[acyl-carrier-protein] (acyl-ACP). This enzyme utilizes acyl-ACP as fatty acyl donor, but not acyl-CoA. This Bacillus subtilis (strain 168) protein is Phosphate acyltransferase.